Here is a 207-residue protein sequence, read N- to C-terminus: MKTKIFSLANEEVGEISLNEDIFAVEFIRDDIIKQVIDWQRAKAMSGNHKTKTVSEVLGTTKKPFKQKGTGNARQGSLRSVQMRGGGVAHGPRVRSHATKLPKKVRKLGLIHALSEKCAEGKLLVIDSLKLDKPKTSALVNILNKFQGKSFFVIDGNEVDINFSLAAKNIYNTVIVPQIGANVYDIIRHEYVLLSQEAVSVLEERLR.

Belongs to the universal ribosomal protein uL4 family. Part of the 50S ribosomal subunit.

In terms of biological role, one of the primary rRNA binding proteins, this protein initially binds near the 5'-end of the 23S rRNA. It is important during the early stages of 50S assembly. It makes multiple contacts with different domains of the 23S rRNA in the assembled 50S subunit and ribosome. Its function is as follows. Forms part of the polypeptide exit tunnel. The protein is Large ribosomal subunit protein uL4 of Rickettsia africae (strain ESF-5).